A 1076-amino-acid chain; its full sequence is Hormone-sensitive lipase (1076 aa).

Composition is skewed to polar residues over residues 1–12 and 38–64; these read MEPGSKSVSRSD and ESKT…QETP. Disordered stretches follow at residues 1–198 and 229–250; these read MEPG…KSKQ and VTDS…PATM. The span at 65–77 shows a compositional bias: basic and acidic residues; the sequence is AQHDAESQKEPRA. Polar residues predominate over residues 94–116; the sequence is APQQSPYIQRVLLTQQEAASQQG. A compositionally biased stretch (pro residues) spans 140–149; it reads GPGPGEPPPA. Low complexity predominate over residues 150–161; it reads QQEAESTPAAQA. The segment covering 172-198 has biased composition (polar residues); that stretch reads PTESTSQETPEQSDKQTTPVQGAKSKQ. Over residues 237–246 the composition is skewed to low complexity; that stretch reads DVGSSSDTDS. Residues 651–653 carry the Involved in the stabilization of the negatively charged intermediate by the formation of the oxyanion hole motif; that stretch reads HGG. Ser-725 is a catalytic residue. Residues 838–930 form a disordered region; the sequence is KSQKMSEPIA…EAEAKNELSP (93 aa). Ser-853 is subject to Phosphoserine. Ser-855 is modified (phosphoserine; by AMPK). Residues 882-908 are compositionally biased toward polar residues; it reads RGNSETSSDTPEMSLSAETLSPSTPSD. A phosphoserine mark is found at Ser-897, Ser-929, Ser-950, and Ser-951. Active-site residues include Asp-994 and His-1024. The tract at residues 1055-1076 is disordered; that stretch reads AGAGPSGETGAAGVDGGCGGRH. Positions 1067 to 1076 are enriched in gly residues; that stretch reads GVDGGCGGRH.

It belongs to the 'GDXG' lipolytic enzyme family. In terms of assembly, monomer and homodimer. Interacts with CAVIN1 in the adipocyte cytoplasm. Interacts with PLIN5. In terms of processing, phosphorylation by AMPK reduces its translocation towards the lipid droplets. As to expression, testis.

The protein resides in the cell membrane. Its subcellular location is the membrane. It localises to the caveola. The protein localises to the cytoplasm. It is found in the cytosol. The protein resides in the lipid droplet. The catalysed reaction is a diacylglycerol + H2O = a monoacylglycerol + a fatty acid + H(+). The enzyme catalyses a triacylglycerol + H2O = a diacylglycerol + a fatty acid + H(+). It catalyses the reaction a monoacylglycerol + H2O = glycerol + a fatty acid + H(+). It carries out the reaction Hydrolyzes glycerol monoesters of long-chain fatty acids.. The catalysed reaction is 1,2-di-(9Z-octadecenoyl)-glycerol + (9Z)-octadecenoate + H(+) = 1,2,3-tri-(9Z-octadecenoyl)-glycerol + H2O. The enzyme catalyses 2,3-di-(9Z)-octadecenoyl-sn-glycerol + H2O = 2-(9Z-octadecenoyl)-glycerol + (9Z)-octadecenoate + H(+). It catalyses the reaction cholesteryl (9Z-octadecenoate) + H2O = cholesterol + (9Z)-octadecenoate + H(+). It carries out the reaction 1,2,3-tri-(9Z-octadecenoyl)-glycerol + H2O = di-(9Z)-octadecenoylglycerol + (9Z)-octadecenoate + H(+). The catalysed reaction is all-trans-retinyl hexadecanoate + H2O = all-trans-retinol + hexadecanoate + H(+). The enzyme catalyses 1,2-di-(9Z-octadecenoyl)-glycerol + H2O = (9Z-octadecenoyl)-glycerol + (9Z)-octadecenoate + H(+). It catalyses the reaction 2-(5Z,8Z,11Z,14Z-eicosatetraenoyl)-glycerol + H2O = glycerol + (5Z,8Z,11Z,14Z)-eicosatetraenoate + H(+). It carries out the reaction 1-(9Z-octadecenoyl)-glycerol + H2O = glycerol + (9Z)-octadecenoate + H(+). The catalysed reaction is 2-(9Z-octadecenoyl)-glycerol + H2O = glycerol + (9Z)-octadecenoate + H(+). The enzyme catalyses 1-O-hexadecyl-2-acetyl-sn-glycerol + H2O = 1-O-hexadecyl-sn-glycerol + acetate + H(+). It catalyses the reaction 1,2-di-(9Z-octadecenoyl)-sn-glycerol + H2O = (9Z-octadecenoyl)-glycerol + (9Z)-octadecenoate + H(+). It carries out the reaction 1,3-di-(9Z-octadecenoyl)-glycerol + H2O = 1-(9Z-octadecenoyl)-glycerol + (9Z)-octadecenoate + H(+). The catalysed reaction is 1,2-di-(9Z-octadecenoyl)-glycerol + H2O = 2-(9Z-octadecenoyl)-glycerol + (9Z)-octadecenoate + H(+). It functions in the pathway glycerolipid metabolism; triacylglycerol degradation. Retinyl ester hydrolase is inhibited by bis-p-nitrophenyl phosphate. Lipase with broad substrate specificity, catalyzing the hydrolysis of triacylglycerols (TAGs), diacylglycerols (DAGs), monoacylglycerols (MAGs), cholesteryl esters and retinyl esters. Shows a preferential hydrolysis of DAGs over TAGs and MAGs and preferentially hydrolyzes the fatty acid (FA) esters at the sn-3 position of the glycerol backbone in DAGs. Preferentially hydrolyzes FA esters at the sn-1 and sn-2 positions of the glycerol backbone in TAGs. Catalyzes the hydrolysis of 2-arachidonoylglycerol, an endocannabinoid and of 2-acetyl monoalkylglycerol ether, the penultimate precursor of the pathway for de novo synthesis of platelet-activating factor. In adipose tissue and heart, it primarily hydrolyzes stored triglycerides to free fatty acids, while in steroidogenic tissues, it principally converts cholesteryl esters to free cholesterol for steroid hormone production. In Homo sapiens (Human), this protein is Hormone-sensitive lipase (LIPE).